The chain runs to 356 residues: Tyrosine recombinase XerS (356 aa).

The 106-residue stretch at 16–121 (IMPWYVLDYY…ALSSLYKYLT (106 aa)) folds into the Core-binding (CB) domain. Residues 169–354 (AFLDYVDKEY…VNDEQKNALD (186 aa)) enclose the Tyr recombinase domain. Catalysis depends on residues R210, K234, H306, R309, and H332. The active-site O-(3'-phospho-DNA)-tyrosine intermediate is the Y341.

The protein belongs to the 'phage' integrase family. XerS subfamily.

The protein resides in the cytoplasm. FtsK is required for recombination. Its function is as follows. Site-specific tyrosine recombinase, which acts by catalyzing the cutting and rejoining of the recombining DNA molecules. Essential to convert dimers of the bacterial chromosome into monomers to permit their segregation at cell division. The sequence is that of Tyrosine recombinase XerS from Streptococcus pyogenes serotype M6 (strain ATCC BAA-946 / MGAS10394).